The chain runs to 325 residues: Protease HtpX homolog 2 (325 aa).

The next 2 membrane-spanning stretches (helical) occupy residues 17–37 (IAIL…FFGF) and 42–62 (LLIT…WLFG). His146 contributes to the Zn(2+) binding site. Glu147 is an active-site residue. Zn(2+) is bound at residue His150. 2 helical membrane-spanning segments follow: residues 158–178 (LLLA…GLWW) and 195–215 (ILFL…LFVL). Glu222 lines the Zn(2+) pocket.

This sequence belongs to the peptidase M48B family. Zn(2+) is required as a cofactor.

It localises to the cell membrane. The chain is Protease HtpX homolog 2 from Sulfurisphaera tokodaii (strain DSM 16993 / JCM 10545 / NBRC 100140 / 7) (Sulfolobus tokodaii).